An 834-amino-acid chain; its full sequence is Mannosyl-oligosaccharide glucosidase (834 aa).

Residues 1-10 are compositionally biased toward basic residues; the sequence is MARGERRRRA. The Cytoplasmic segment spans residues 1-36; that stretch reads MARGERRRRAAAAEGARPLERARGAGRRDGRAGGAR. The segment at 1–37 is disordered; it reads MARGERRRRAAAAEGARPLERARGAGRRDGRAGGARG. The short motif at 3 to 9 is the Endoplasmic reticulum targeting element; that stretch reads RGERRRR. Over residues 17–31 the composition is skewed to basic and acidic residues; the sequence is RPLERARGAGRRDGR. Residues 37-57 traverse the membrane as a helical; Signal-anchor for type II membrane protein segment; the sequence is GSAGGAALAVVVLALAFGLSG. At 58–834 the chain is on the lumenal side; that stretch reads RWVLAWLGVR…LVLLIMAEEY (777 aa). Residues 74–136 form a required for endoplasmic reticulum targeting region; sequence PAPSALPPDS…GTPPKLRHTC (63 aa). Asp-580 acts as the Proton donor in catalysis. Asn-654 carries an N-linked (GlcNAc...) asparagine glycan. Glu-804 (proton acceptor) is an active-site residue.

This sequence belongs to the glycosyl hydrolase 63 family.

Its subcellular location is the endoplasmic reticulum membrane. The catalysed reaction is N(4)-(alpha-D-Glc-(1-&gt;2)-alpha-D-Glc-(1-&gt;3)-alpha-D-Glc-(1-&gt;3)-alpha-D-Man-(1-&gt;2)-alpha-D-Man-(1-&gt;2)-alpha-D-Man-(1-&gt;3)-[alpha-D-Man-(1-&gt;2)-alpha-D-Man-(1-&gt;3)-[alpha-D-Man-(1-&gt;2)-alpha-D-Man-(1-&gt;6)]-alpha-D-Man-(1-&gt;6)]-beta-D-Man-(1-&gt;4)-beta-D-GlcNAc-(1-&gt;4)-beta-D-GlcNAc)-L-asparaginyl-[protein] + H2O = N(4)-(alpha-D-Glc-(1-&gt;3)-alpha-D-Glc-(1-&gt;3)-alpha-D-Man-(1-&gt;2)-alpha-D-Man-(1-&gt;2)-alpha-D-Man-(1-&gt;3)-[alpha-D-Man-(1-&gt;2)-alpha-D-Man-(1-&gt;3)-[alpha-D-Man-(1-&gt;2)-alpha-D-Man-(1-&gt;6)]-alpha-D-Man-(1-&gt;6)]-beta-D-Man-(1-&gt;4)-beta-D-GlcNAc-(1-&gt;4)-beta-D-GlcNAc)-L-asparaginyl-[protein] + beta-D-glucose. It participates in glycan metabolism; N-glycan degradation. In the context of N-glycan degradation, cleaves the distal alpha 1,2-linked glucose residue from the Glc(3)Man(9)GlcNAc(2) oligosaccharide precursor in a highly specific manner. This Rattus norvegicus (Rat) protein is Mannosyl-oligosaccharide glucosidase.